The chain runs to 121 residues: Urotensin-2 (121 aa).

The signal sequence occupies residues 1–19 (MSKLVPCLLLLGCLGLLFA). Residues 20 to 106 (LPVPDSRKEP…HLLARIKKPY (87 aa)) constitute a propeptide that is removed on maturation. A disulfide bridge connects residues C115 and C120.

It belongs to the urotensin-2 family.

The protein localises to the secreted. Its function is as follows. Highly potent vasoconstrictor. The sequence is that of Urotensin-2 (UTS2) from Sus scrofa (Pig).